Consider the following 263-residue polypeptide: Isoprenyl transferase (263 aa).

Residue D38 is part of the active site. D38 contacts Mg(2+). Residues 39–42 (GNRR), H55, and 83–85 (STD) contribute to the substrate site. The active-site Proton acceptor is N86. Substrate contacts are provided by residues F87, R89, R212, and 218 to 220 (RLS). E231 serves as a coordination point for Mg(2+).

Belongs to the UPP synthase family. In terms of assembly, homodimer. Mg(2+) serves as cofactor.

Its function is as follows. Catalyzes the condensation of isopentenyl diphosphate (IPP) with allylic pyrophosphates generating different type of terpenoids. The polypeptide is Isoprenyl transferase (Thermus thermophilus (strain ATCC 27634 / DSM 579 / HB8)).